The sequence spans 218 residues: Hypoxanthine-guanine phosphoribosyltransferase (218 aa).

A2 is subject to N-acetylalanine. Residue K69 participates in GMP binding. N6-acetyllysine is present on K103. K115 is covalently cross-linked (Glycyl lysine isopeptide (Lys-Gly) (interchain with G-Cter in SUMO1); alternate). A Glycyl lysine isopeptide (Lys-Gly) (interchain with G-Cter in SUMO2); alternate cross-link involves residue K115. GMP contacts are provided by residues 134–142, K166, 186–188, and D194; these read EDIIDTGKT and KFV. The active-site Proton acceptor is D138. The residue at position 142 (T142) is a Phosphothreonine. D194 contributes to the Mg(2+) binding site.

It belongs to the purine/pyrimidine phosphoribosyltransferase family. As to quaternary structure, homotetramer. Mg(2+) serves as cofactor.

The protein localises to the cytoplasm. It carries out the reaction IMP + diphosphate = hypoxanthine + 5-phospho-alpha-D-ribose 1-diphosphate. The catalysed reaction is GMP + diphosphate = guanine + 5-phospho-alpha-D-ribose 1-diphosphate. It functions in the pathway purine metabolism; IMP biosynthesis via salvage pathway; IMP from hypoxanthine: step 1/1. Functionally, converts guanine to guanosine monophosphate, and hypoxanthine to inosine monophosphate. Transfers the 5-phosphoribosyl group from 5-phosphoribosylpyrophosphate onto the purine. Plays a central role in the generation of purine nucleotides through the purine salvage pathway. The polypeptide is Hypoxanthine-guanine phosphoribosyltransferase (HPRT1) (Bos taurus (Bovine)).